The following is a 349-amino-acid chain: Kelch domain-containing protein 9 (349 aa).

Kelch repeat units lie at residues 39-89 (RFYL…PVDG), 91-137 (WLCV…SHTC), and 325-349 (QLYLVGGFGEDGRTASPQVCILDFI).

Interacts with CCNA1.

The polypeptide is Kelch domain-containing protein 9 (KLHDC9) (Homo sapiens (Human)).